The chain runs to 265 residues: Tryptophan synthase alpha chain (265 aa).

Catalysis depends on proton acceptor residues Glu49 and Glu60.

It belongs to the TrpA family. In terms of assembly, tetramer of two alpha and two beta chains.

The catalysed reaction is (1S,2R)-1-C-(indol-3-yl)glycerol 3-phosphate + L-serine = D-glyceraldehyde 3-phosphate + L-tryptophan + H2O. It participates in amino-acid biosynthesis; L-tryptophan biosynthesis; L-tryptophan from chorismate: step 5/5. In terms of biological role, the alpha subunit is responsible for the aldol cleavage of indoleglycerol phosphate to indole and glyceraldehyde 3-phosphate. This Janthinobacterium sp. (strain Marseille) (Minibacterium massiliensis) protein is Tryptophan synthase alpha chain.